The chain runs to 253 residues: Phosphoadenosine 5'-phosphosulfate reductase (253 aa).

Catalysis depends on Cys239, which acts as the Nucleophile; cysteine thiosulfonate intermediate.

Belongs to the PAPS reductase family. CysH subfamily.

It localises to the cytoplasm. It carries out the reaction [thioredoxin]-disulfide + sulfite + adenosine 3',5'-bisphosphate + 2 H(+) = [thioredoxin]-dithiol + 3'-phosphoadenylyl sulfate. It participates in sulfur metabolism; hydrogen sulfide biosynthesis; sulfite from sulfate: step 3/3. Catalyzes the formation of sulfite from phosphoadenosine 5'-phosphosulfate (PAPS) using thioredoxin as an electron donor. The protein is Phosphoadenosine 5'-phosphosulfate reductase of Aliivibrio fischeri (strain MJ11) (Vibrio fischeri).